We begin with the raw amino-acid sequence, 290 residues long: MNFQDMTLSLHRFWEEQGCLIVQPYDVEKGAGTMNPHTFLRAIGPEPWNVAYIEPCRRPTDGRYAQNPNRLQHYYQYQVLMKPSPGDIQERYLRSLEVLGIHPEKHDVRFVEDNWESPTLGAWGVGWEVWLDGMEVTQFTYFQQCGGIDCRPVSIEITYGIERLAMYLQGVDSIFDIEWGAGLTYGQVHREGEIENCIYNFEQANPELLFTLFKLYEQEATALSERRLVLPALDYVLKCSHTFNLLDARGVIAVTERTGYIGRIRHLARRIAQAYAKQRESLGFPLLSKT.

The protein belongs to the class-II aminoacyl-tRNA synthetase family. In terms of assembly, tetramer of two alpha and two beta subunits.

Its subcellular location is the cytoplasm. It catalyses the reaction tRNA(Gly) + glycine + ATP = glycyl-tRNA(Gly) + AMP + diphosphate. The sequence is that of Glycine--tRNA ligase alpha subunit from Gloeobacter violaceus (strain ATCC 29082 / PCC 7421).